We begin with the raw amino-acid sequence, 316 residues long: SHC-transforming protein homolog 1 (316 aa).

The 143-residue stretch at 16–158 folds into the PID domain; it reads GVSLSATYLG…LIDVLTTAIN (143 aa). An SH2 domain is found at 211–307; the sequence is WYHGNLSRED…ETSLNLIRPV (97 aa). The disordered stretch occupies residues 292 to 316; sequence SEGRDRETSLNLIRPVPCPGSDDIE.

As to quaternary structure, interacts (via PID domain) with daf-2 (via cytoplasmic domain). Interacts with mek-1; the interaction is independent of mek-1 catalytic activity and is constitutive. Interacts (via N-terminus) with mlk-1 (via NPQY motif when phosphorylated on tyrosine residue). Does not interact with jkk-1 or sek-1. Interacts (via SH2 domain) with svh-2. Interacts with svh-4. As to expression, expressed in hypodermis, intestine, head and tail neurons, pharynx, gonads, vulva and body muscles.

It localises to the cytoplasm. The protein resides in the nucleus. The protein localises to the cell membrane. In terms of biological role, scaffold protein which plays an important role in the activation of the JNK pathway composed of mlk-1, mek-1 and kgb-1; by bringing together mek-1 and mlk-1, promotes mlk-1-mediated phosphorylation and activation of mek-1 which in turn phosphorylates kgb-1. In addition, negatively modulates the activation of the insulin/IGF-1-like signaling (IIS) probably by inhibiting the insulin receptor daf-2. Positively regulates the activity of the transcription factor daf-16/FOXO by both inhibiting IIS and activating the JNK pathway. Plays a role in maintaining gonadal basement membrane integrity through activation of the JNK pathway components mek-1 and jnk-1. Involved in the response to several environmental stresses including heavy metal ions (Cu(2+) and Cd(2+)), heat, oxidative and protein misfolding (ER) stresses. Plays a role in gonad and germline development following the L1 diapause. Plays a role in life span and egg laying. Plays a role in axon regeneration after injury. This Caenorhabditis elegans protein is SHC-transforming protein homolog 1.